Here is a 103-residue protein sequence, read N- to C-terminus: Small ribosomal subunit protein uS10 (103 aa).

The protein belongs to the universal ribosomal protein uS10 family. As to quaternary structure, part of the 30S ribosomal subunit.

Functionally, involved in the binding of tRNA to the ribosomes. This Borrelia recurrentis (strain A1) protein is Small ribosomal subunit protein uS10.